Here is a 229-residue protein sequence, read N- to C-terminus: MTSKSLNAWVIHKQWSGDTSARLKLFTRELGLINCLCKGGRTPKKQSLLQAFIPLWVSIEERYDQYYTRNIESTSSRLDLEGHSLFSGLYINELLYYTLSPDFPDPDLFDAYLFTLNGIALAREREAIEALLRRFEWALLKACGYTFSFLHEARTGELIVPDSYYQFVAGEGFILGGDKEIPGEHLLAIAADNLSESAYLKSAKFIMRQAINHLLGGREIKARSLYGPA.

It belongs to the RecO family.

Its function is as follows. Involved in DNA repair and RecF pathway recombination. The protein is DNA repair protein RecO of Legionella pneumophila subsp. pneumophila (strain Philadelphia 1 / ATCC 33152 / DSM 7513).